Consider the following 883-residue polypeptide: Integrator complex subunit 6-B (883 aa).

Positions isoleucine 3–isoleucine 227 constitute a VWFA domain. Residues methionine 626 to glutamate 633 carry the Inhibitory loop motif.

It belongs to the Integrator subunit 6 family. In terms of assembly, component of the Integrator complex, composed of core subunits INTS1, INTS2, INTS3, INTS4, INTS5, INTS6, INTS7, INTS8, INTS9/RC74, INTS10, INTS11/CPSF3L, INTS12, INTS13, INTS14 and INTS15. The core complex associates with protein phosphatase 2A subunits PPP2CA and PPP2R1A, to form the Integrator-PP2A (INTAC) complex.

It localises to the nucleus. The protein resides in the chromosome. Its function is as follows. Component of the integrator complex, a multiprotein complex that terminates RNA polymerase II (Pol II) transcription in the promoter-proximal region of genes. The integrator complex provides a quality checkpoint during transcription elongation by driving premature transcription termination of transcripts that are unfavorably configured for transcriptional elongation: the complex terminates transcription by (1) catalyzing dephosphorylation of the C-terminal domain (CTD) of Pol II subunit POLR2A/RPB1 and SUPT5H/SPT5, (2) degrading the exiting nascent RNA transcript via endonuclease activity and (3) promoting the release of Pol II from bound DNA. The integrator complex is also involved in terminating the synthesis of non-coding Pol II transcripts, such as enhancer RNAs (eRNAs), small nuclear RNAs (snRNAs), telomerase RNAs and long non-coding RNAs (lncRNAs). Within the integrator complex, INTS6 acts as a molecular adapter that promotes assembly of protein phosphatase 2A (PP2A) subunits to the integrator core complex, promoting recruitment of PP2A to transcription pause-release checkpoint. This Xenopus laevis (African clawed frog) protein is Integrator complex subunit 6-B (ints6-b).